A 325-amino-acid chain; its full sequence is Alkanal monooxygenase beta chain (325 aa).

This sequence belongs to the bacterial luciferase oxidoreductase family. Heterodimer of an alpha and a beta chain.

It catalyses the reaction a long-chain fatty aldehyde + FMNH2 + O2 = a long-chain fatty acid + hnu + FMN + H2O + 2 H(+). Its function is as follows. Light-emitting reaction in luminous bacteria. The specific role of the beta subunit is unknown, but it is absolutely required for bioluminescence activity. This is Alkanal monooxygenase beta chain (luxB) from Photobacterium leiognathi.